A 68-amino-acid polypeptide reads, in one-letter code: Conotoxin TsMMSK-021 (68 aa).

The N-terminal stretch at 1–20 (MMSKLGVLLTICLLLFPLTA) is a signal peptide. The propeptide occupies 21–50 (VPLDGDQHADRPADRMQDISSEQHPLFDPV). Cystine bridges form between Cys-53–Cys-66, Cys-54–Cys-62, and Cys-58–Cys-65. Pro-64 carries the post-translational modification 4-hydroxyproline.

Belongs to the conotoxin M superfamily. In terms of tissue distribution, expressed by the venom duct.

It localises to the secreted. The protein is Conotoxin TsMMSK-021 of Conus tessulatus (Tessellate cone).